The following is a 426-amino-acid chain: MKRLIAWLSDLRVAIVLLFLIALASAVGTAIPQGDAPRSYVEAYATRPWLGLLNGEQVLQLQLDHVYSSVWFLSLLAWLGLALILCSWRRQWPALQAARRWIDYSNPRQLSKLAIAESLPCTDSNSALQAFSTVLSQQGWRLERKDNRLAARKGTAGRVGPLLVHTGLILLMLGAVWGVLAGNRLERFLAPGRTLDLLSRDGDSQVSILLEAFQVDRDPAGRAEQFRSQLHLEENGNSLDREISVNHPLRHRGITIYQADWSLAAITLQIGRSPQLQLALRSFPELGEQVWGLVLPTRPDGSEPVFLSVENEQGPINIFDTDGTLLTLLRPGGPAVDVKGLPMRVNSVLPASGLLLKRDPGVPLVYLGFAVMLIGGGLSLIATRQLWAIASEGQLHVGGLCNRNLTAFSKELPSLLRQTALAHQQG.

3 helical membrane passes run 11–31 (LRVA…GTAI), 69–89 (SVWF…CSWR), and 159–179 (VGPL…VWGV).

This sequence belongs to the Ccs1/CcsB family. In terms of assembly, may interact with CcsA.

Its subcellular location is the cellular thylakoid membrane. Required during biogenesis of c-type cytochromes (cytochrome c6 and cytochrome f) at the step of heme attachment. This is Cytochrome c biogenesis protein CcsB from Synechococcus sp. (strain CC9902).